The chain runs to 122 residues: Ribosome-binding factor A (122 aa).

Belongs to the RbfA family. In terms of assembly, monomer. Binds 30S ribosomal subunits, but not 50S ribosomal subunits or 70S ribosomes.

It localises to the cytoplasm. Its function is as follows. One of several proteins that assist in the late maturation steps of the functional core of the 30S ribosomal subunit. Associates with free 30S ribosomal subunits (but not with 30S subunits that are part of 70S ribosomes or polysomes). Required for efficient processing of 16S rRNA. May interact with the 5'-terminal helix region of 16S rRNA. The sequence is that of Ribosome-binding factor A from Moorella thermoacetica (strain ATCC 39073 / JCM 9320).